The sequence spans 304 residues: DCN1-like protein 3 (304 aa).

Disordered regions lie at residues 1-86 and 284-304; these read MGQC…AEES and EGEG…EEQT. Gly-2 carries the N-myristoyl glycine lipid modification. The DCUN1 domain occupies 86–278; that stretch reads SSLQRLEELF…LFDTFVEWEM (193 aa).

In terms of assembly, part of a complex containing DCUN1D3, CUL3 and RBX1. Interacts (via the DCUN1 domain) with the unneddylated cullins: interacts with CUL1, CUL2, CUL3, CUL4A, CUL4B and CUL5; these interactions promote the cullin neddylation and the identity of the cullin dictates the affinity of the interaction. Interacts preferentially with CUL3; this interaction triggers the relocalization of CUL3 to the cell membrane where CUL3 is neddylated. Interacts (via DCUN1 domain) with RBX1. May also interact with regulators or subunits of cullin-RING ligases such as RNF7, ELOB and DDB1; these interactions are bridged by cullins. Interacts (via DCUN1 domain) with CAND1; this interaction is bridged by cullins and strongly inhibits cullin neddylation. These CAND-cullin-DCNL complexes can only be neddylated in the presence of a substrate adapter. Interacts (via DCUN1 domain) with the N-terminally acetylated form of UBE2M and UBE2F. Tends to be down-regulated in different type of cancers, including lung neuroendocrine carcinoma, thyroid Huerthle cell carcinoma and lung squamous cell carcinoma. Mostly expressed in testis and brain. Highly expressed in liver, bladder and renal normal tissue than their tumor tissue counterparts. Palmitoylation stabilizes DCUN1D3 at the cell membrane.

It localises to the cell membrane. The protein localises to the cytoplasm. The protein resides in the nucleus. Its subcellular location is the perinuclear region. Contributes to the neddylation of all cullins by transferring NEDD8 from N-terminally acetylated NEDD8-conjugating E2s enzyme to different cullin C-terminal domain-RBX complexes and may play a role in the cell cycle progression by regulating the SCF ubiquitin E3 ligase complex, after UV damage. At the cell membrane, can promote and as well inhibit cullins neddylation. The sequence is that of DCN1-like protein 3 from Homo sapiens (Human).